We begin with the raw amino-acid sequence, 273 residues long: Nucleotide-binding protein TTHA0319 (273 aa).

8-15 is a binding site for ATP; it reads GLSGAGKT. 57–60 contributes to the GTP binding site; that stretch reads DARA.

Belongs to the RapZ-like family.

Displays ATPase and GTPase activities. The polypeptide is Nucleotide-binding protein TTHA0319 (Thermus thermophilus (strain ATCC 27634 / DSM 579 / HB8)).